The following is a 255-amino-acid chain: uncharacterized protein (255 aa).

The first 23 residues, 1–23 (MKRLNKLVLGIIFLFLVISITAG), serve as a signal peptide directing secretion. The N-palmitoyl cysteine moiety is linked to residue Cys24. Cys24 carries the S-diacylglycerol cysteine lipid modification.

It belongs to the staphylococcal tandem lipoprotein family.

The protein localises to the cell membrane. This is an uncharacterized protein from Staphylococcus aureus (strain USA300).